Here is a 181-residue protein sequence, read N- to C-terminus: Cytochrome c-type biogenesis protein CcmE (181 aa).

The Cytoplasmic segment spans residues 1–8; that stretch reads MNPRRKSR. A helical; Signal-anchor for type II membrane protein membrane pass occupies residues 9–29; the sequence is LKVVVSIIFGVAVAAGLTLYA. Over 30 to 181 the chain is Periplasmic; it reads LSQNIDLFYT…TLKTLQGEAN (152 aa). Heme-binding residues include His131 and Tyr135. 2 stretches are compositionally biased toward basic and acidic residues: residues 135–148 and 156–166; these read YMPP…KEQH and ADLKGTSARDK. A disordered region spans residues 135 to 166; sequence YMPPELGDKLKEQHGAAGISEADLKGTSARDK.

Belongs to the CcmE/CycJ family.

The protein localises to the cell inner membrane. In terms of biological role, heme chaperone required for the biogenesis of c-type cytochromes. Transiently binds heme delivered by CcmC and transfers the heme to apo-cytochromes in a process facilitated by CcmF and CcmH. The chain is Cytochrome c-type biogenesis protein CcmE from Actinobacillus pleuropneumoniae serotype 7 (strain AP76).